A 122-amino-acid chain; its full sequence is Nuclear transcription factor Y subunit beta (122 aa).

A subunit association domain (SAD) region spans residues 1-12 (VQECVSEFISFI). The b domain stretch occupies residues 1–57 (VQECVSEFISFITSEASERCHQEKRKTINGEDILFAMSTLGFDSYVEPLKLYLQKFR). Residues 58–122 (EAMKGEKGIG…ISGVQQIQFS (65 aa)) form a c domain region.

This sequence belongs to the NFYB/HAP3 subunit family. In terms of assembly, heterotrimeric transcription factor composed of three components, NF-YA, NF-YB and NF-YC. NF-YB and NF-YC must interact and dimerize for NF-YA association and DNA binding.

It is found in the nucleus. Component of the sequence-specific heterotrimeric transcription factor (NF-Y) which specifically recognizes a 5'-CCAAT-3' box motif found in the promoters of its target genes. NF-Y can function as both an activator and a repressor, depending on its interacting cofactors. The polypeptide is Nuclear transcription factor Y subunit beta (nfyb) (Xenopus laevis (African clawed frog)).